Reading from the N-terminus, the 274-residue chain is Diaminopimelate epimerase (274 aa).

Substrate contacts are provided by N11 and N65. Catalysis depends on C74, which acts as the Proton donor. Substrate contacts are provided by residues 75–76 (GN), N158, N191, and 209–210 (ER). Residue C218 is the Proton acceptor of the active site. 219-220 (GT) serves as a coordination point for substrate.

It belongs to the diaminopimelate epimerase family. Homodimer.

The protein resides in the cytoplasm. It catalyses the reaction (2S,6S)-2,6-diaminopimelate = meso-2,6-diaminopimelate. Its pathway is amino-acid biosynthesis; L-lysine biosynthesis via DAP pathway; DL-2,6-diaminopimelate from LL-2,6-diaminopimelate: step 1/1. Its function is as follows. Catalyzes the stereoinversion of LL-2,6-diaminopimelate (L,L-DAP) to meso-diaminopimelate (meso-DAP), a precursor of L-lysine and an essential component of the bacterial peptidoglycan. The sequence is that of Diaminopimelate epimerase from Carboxydothermus hydrogenoformans (strain ATCC BAA-161 / DSM 6008 / Z-2901).